A 200-amino-acid chain; its full sequence is Glycerol-3-phosphate acyltransferase (200 aa).

Transmembrane regions (helical) follow at residues 3–23, 50–70, 75–95, 109–129, and 134–154; these read YIYS…FFIA, FYGA…VFLV, IKFM…SIFL, VFLA…LFIV, and YVSL…FFAG.

Belongs to the PlsY family. In terms of assembly, probably interacts with PlsX.

Its subcellular location is the cell inner membrane. It carries out the reaction an acyl phosphate + sn-glycerol 3-phosphate = a 1-acyl-sn-glycero-3-phosphate + phosphate. The protein operates within lipid metabolism; phospholipid metabolism. Functionally, catalyzes the transfer of an acyl group from acyl-phosphate (acyl-PO(4)) to glycerol-3-phosphate (G3P) to form lysophosphatidic acid (LPA). This enzyme utilizes acyl-phosphate as fatty acyl donor, but not acyl-CoA or acyl-ACP. The polypeptide is Glycerol-3-phosphate acyltransferase (Thermosipho melanesiensis (strain DSM 12029 / CIP 104789 / BI429)).